A 194-amino-acid polypeptide reads, in one-letter code: Heme transporter hrg-1 (194 aa).

The next 4 helical transmembrane spans lie at 45–65 (QIWI…VFAI), 71–91 (IAVT…HLHL), 113–133 (GATV…VAGI), and 143–163 (LMGA…KWSA). Residues 182 to 183 (LL) carry the Di-leucine motif motif.

Belongs to the HRG family. In terms of tissue distribution, specifically expressed in the intestinal cells in larvae and adults.

It localises to the endosome membrane. It is found in the lysosome membrane. Its function is as follows. Heme transporter that regulates intracellular heme availability through the endosomal or lysosomal compartment. The sequence is that of Heme transporter hrg-1 (hrg-1) from Caenorhabditis elegans.